Consider the following 463-residue polypeptide: Digalactosyldiacylglycerol synthase 2, chloroplastic (463 aa).

A signal peptide spans 1-22 (MGKKQHIAIFTTASLPWLTGTA).

Belongs to the glycosyltransferase group 1 family. Glycosyltransferase 4 subfamily. High expression in nodules infected cells, and low in nodule and root vascular tissue.

Its subcellular location is the plastid. The protein localises to the chloroplast outer membrane. It is found in the plastid outer membrane. It catalyses the reaction a 1,2-diacyl-3-O-(beta-D-galactosyl)-sn-glycerol + UDP-alpha-D-galactose = a 1,2-diacyl-3-O-[alpha-D-galactosyl-(1-&gt;6)-beta-D-galactosyl]-sn-glycerol + UDP + H(+). In terms of biological role, involved in the synthesis of diacylglycerol galactolipids that are specifically found in thylakoid and in nodule peribacteroid membranes. Specific for alpha-glycosidic linkages. The chain is Digalactosyldiacylglycerol synthase 2, chloroplastic from Lotus japonicus (Lotus corniculatus var. japonicus).